The sequence spans 370 residues: Sphingolipid delta(4)-desaturase (370 aa).

Transmembrane regions (helical) follow at residues 68 to 88 (VMGVVLLQLGIAYYLRHTPVF), 92 to 112 (FLTLAYVIGATANQAIFLAIH), and 128 to 148 (LFAVFANIPIGVPYSASFQPY). The Histidine box-1 signature appears at 112–116 (HELSH). The short motif at 149 to 153 (HQLHH) is the Histidine box-2 element. A run of 3 helical transmembrane segments spans residues 173 to 193 (FLSSMPGKLFFAIFQIFFYAL), 197 to 217 (FITQIKFTYVHLVNVVFQLIF), and 220 to 240 (VMVTCWGWKALGYFIVSTFLA). Positions 299-303 (HNEHH) match the Histidine box-3 motif.

Belongs to the fatty acid desaturase type 1 family. DEGS subfamily.

The protein localises to the membrane. The catalysed reaction is an N-acylsphinganine + 2 Fe(II)-[cytochrome b5] + O2 + 2 H(+) = an N-acylsphing-4-enine + 2 Fe(III)-[cytochrome b5] + 2 H2O. It participates in lipid metabolism; sphingolipid metabolism. Delta(4)-fatty-acid desaturase which introduces a double bond at the 4-position in the long-chain base (LCB) of ceramides. Required for the formation of the monounsaturated sphingoid base (E)-sphing-4-enine during glucosylceramide (GluCer) biosynthesis. The chain is Sphingolipid delta(4)-desaturase from Candida albicans (strain SC5314 / ATCC MYA-2876) (Yeast).